The primary structure comprises 375 residues: UDP-4-amino-4,6-dideoxy-N-acetyl-beta-L-altrosamine transaminase (375 aa).

Residues Y6, 26-29 (KQLT), A56, and S178 contribute to the substrate site. The residue at position 183 (K183) is an N6-(pyridoxal phosphate)lysine. Residues N228 and 313–316 (QVHY) contribute to the substrate site.

It belongs to the DegT/DnrJ/EryC1 family.

The catalysed reaction is UDP-4-amino-4,6-dideoxy-N-acetyl-beta-L-altrosamine + 2-oxoglutarate = UDP-2-acetamido-2,6-dideoxy-beta-L-arabino-hex-4-ulose + L-glutamate. Functionally, catalyzes the second step in the biosynthesis of pseudaminic acid, a sialic-acid-like sugar that is used to modify flagellin. Uses UDP-2-acetamido-2,6-dideoxy-beta-L-arabino-4-hexulose as substrate producing UDP-4-amino-4,6-dideoxy-beta-L-AltNAc. The sequence is that of UDP-4-amino-4,6-dideoxy-N-acetyl-beta-L-altrosamine transaminase (pseC) from Helicobacter pylori (strain ATCC 700392 / 26695) (Campylobacter pylori).